The primary structure comprises 225 residues: Transmembrane protein 40 (225 aa).

N-acetylmethionine is present on M1. A compositionally biased stretch (low complexity) spans M1 to G14. The interval M1 to H96 is disordered. Basic and acidic residues predominate over residues G15 to L29. Residues H30 to R39 are compositionally biased toward basic residues. The span at S46–D68 shows a compositional bias: low complexity. Residues G78 to R87 show a composition bias toward basic residues. Position 129 is a phosphoserine (S129). The next 2 helical transmembrane spans lie at F152 to Y172 and L179 to V199.

The protein resides in the membrane. This Mus musculus (Mouse) protein is Transmembrane protein 40 (Tmem40).